Here is a 453-residue protein sequence, read N- to C-terminus: 4,4'-diapolycopene-4,4'-dial dehydrogenase (453 aa).

Residues 1–20 (MPDNDSHSLKSLPERQREDL) are compositionally biased toward basic and acidic residues. Positions 1-23 (MPDNDSHSLKSLPERQREDLFSA) are disordered. Residues glutamate 215 and cysteine 249 contribute to the active site.

Belongs to the aldehyde dehydrogenase family.

It carries out the reaction all-trans-4,4'-diapolycopene-4,4'-dial + 2 A + 2 H2O = all-trans-4,4'-diapolycopene-4,4'-dioate + 2 AH2 + 2 H(+). The protein operates within carotenoid biosynthesis. In terms of biological role, involved in the biosynthesis of the major C30 carotenoid 4,4'-diapolycopene-4,4'-dioic acid, which protects B.firmus from peroxidative reactions. Catalyzes the oxidation of 4,4'-diapolycopene-4,4'-dial to yield 4,4'-diapolycopene-4,4'-dioic aci. This chain is 4,4'-diapolycopene-4,4'-dial dehydrogenase, found in Cytobacillus firmus (Bacillus firmus).